Consider the following 336-residue polypeptide: MNAPDTLTGLEANAPVTEEAPAASEAERKRAHTRREQKEQYENNKLFKRLARQVGQAIGDFNMIEDGDKVMVCLSGGKDSYAMLDVLMRLRERAPIHFDIVAVNLDQKQPGFPEHVLPEYLSKLDIPYHIENQDTYSIVKRLVPEGKTTCSLCSRLRRGILYRVAGELGATKIALGHHRDDILQTLLLNLFYGGKLKGMPPKLQSDDGKNVVIRPLAYVKETDLEKYAELRQFPIIPCNLCGSQPNLKRAEMKALIREWDKRFPGRVDNMFNALSNVVPSHLMDHKLFPFASLRATGEADPHGDIAFDEEPCSADSASNQTQRPSQTVSFVQFDDI.

The disordered stretch occupies residues 1-42 (MNAPDTLTGLEANAPVTEEAPAASEAERKRAHTRREQKEQYE). The short motif at 75-80 (SGGKDS) is the PP-loop motif element. Residues Cys-150, Cys-153, and Cys-241 each coordinate [4Fe-4S] cluster. The interval 301 to 328 (PHGDIAFDEEPCSADSASNQTQRPSQTV) is disordered. Positions 315 to 328 (DSASNQTQRPSQTV) are enriched in polar residues.

Belongs to the TtcA family. As to quaternary structure, homodimer. The cofactor is Mg(2+). [4Fe-4S] cluster is required as a cofactor.

It localises to the cytoplasm. The catalysed reaction is cytidine(32) in tRNA + S-sulfanyl-L-cysteinyl-[cysteine desulfurase] + AH2 + ATP = 2-thiocytidine(32) in tRNA + L-cysteinyl-[cysteine desulfurase] + A + AMP + diphosphate + H(+). Its pathway is tRNA modification. Catalyzes the ATP-dependent 2-thiolation of cytidine in position 32 of tRNA, to form 2-thiocytidine (s(2)C32). The sulfur atoms are provided by the cysteine/cysteine desulfurase (IscS) system. The protein is tRNA-cytidine(32) 2-sulfurtransferase of Paraburkholderia phymatum (strain DSM 17167 / CIP 108236 / LMG 21445 / STM815) (Burkholderia phymatum).